A 433-amino-acid polypeptide reads, in one-letter code: Dihydroorotase (433 aa).

The Zn(2+) site is built by histidine 63 and histidine 65. Substrate is bound by residues 65–67 and asparagine 97; that span reads HLR. 3 residues coordinate Zn(2+): aspartate 155, histidine 182, and histidine 235. Asparagine 283 is a binding site for substrate. Aspartate 310 serves as a coordination point for Zn(2+). Residue aspartate 310 is part of the active site. Histidine 314 contacts substrate.

This sequence belongs to the metallo-dependent hydrolases superfamily. DHOase family. Class I DHOase subfamily. Requires Zn(2+) as cofactor.

It catalyses the reaction (S)-dihydroorotate + H2O = N-carbamoyl-L-aspartate + H(+). The protein operates within pyrimidine metabolism; UMP biosynthesis via de novo pathway; (S)-dihydroorotate from bicarbonate: step 3/3. Its function is as follows. Catalyzes the reversible cyclization of carbamoyl aspartate to dihydroorotate. In Anaeromyxobacter dehalogenans (strain 2CP-1 / ATCC BAA-258), this protein is Dihydroorotase.